Here is a 266-residue protein sequence, read N- to C-terminus: Small ribosomal subunit protein eS1 (266 aa).

The segment at 237–266 (DGGSKTGEVGETGSKVDRPEGYEPPVQETV) is disordered.

Belongs to the eukaryotic ribosomal protein eS1 family. In terms of assembly, component of the small ribosomal subunit. Mature ribosomes consist of a small (40S) and a large (60S) subunit. The 40S subunit contains about 33 different proteins and 1 molecule of RNA (18S). The 60S subunit contains about 49 different proteins and 3 molecules of RNA (28S, 5.8S and 5S).

It is found in the cytoplasm. This chain is Small ribosomal subunit protein eS1, found in Lysiphlebus testaceipes (Greenbugs aphid parastoid).